Consider the following 166-residue polypeptide: MDGAATKFFRPWESHGSYHHSLPSISPPDSPASTSASSSSSSIGANELTTKRRKCERCTCPNCKAIKHGDRGSQHTHLCSVPGCGKTYKKTSHLRAHLRKHTGDRPFVCDWFDCGKRFDRSDQLIRHKRTHTKEYRFACKFCIRQFSRSDHLQQHLTSVHNIVVVD.

A disordered region spans residues 17 to 45 (SYHHSLPSISPPDSPASTSASSSSSSIGA). Residues 31-42 (PASTSASSSSSS) show a composition bias toward low complexity. C2H2-type zinc fingers lie at residues 77–101 (HLCS…LRKH), 107–131 (FVCD…KRTH), and 137–160 (FACK…TSVH).

It belongs to the Sp1 C2H2-type zinc-finger protein family.

Its function is as follows. Transcription factor. Probably acts downstream of the Wnt signaling pathway. In Caenorhabditis elegans, this protein is Specificity protein transcription factor 2.